The chain runs to 479 residues: RAC-gamma serine/threonine-protein kinase (479 aa).

Serine 2 carries the post-translational modification N-acetylserine. The region spanning 5-107 (TIVKEGWVQK…WTEAIQAVAD (103 aa)) is the PH domain. Cysteine 59 and cysteine 76 are oxidised to a cystine. Residues 148 to 405 (FDYLKLLGKG…AKEIMRHSFF (258 aa)) enclose the Protein kinase domain. ATP-binding positions include 154–162 (LGKGTFGKV) and lysine 177. Aspartate 271 (proton acceptor) is an active-site residue. Cysteine 293 and cysteine 307 are joined by a disulfide. An O-linked (GlcNAc) threonine glycan is attached at threonine 302. At threonine 305 the chain carries Phosphothreonine; by PDPK1. O-linked (GlcNAc) threonine glycosylation occurs at threonine 309. The region spanning 406-479 (SGVNWQDVYD…QFSYSASGRE (74 aa)) is the AGC-kinase C-terminal domain. The disordered stretch occupies residues 445 to 479 (TITPPEKYDDDGMDGMDNERRPHFPQFSYSASGRE). Threonine 447 carries the phosphothreonine modification. A Phosphoserine; by PKC/PRKCZ modification is found at serine 472. Serine 472 is a glycosylation site (O-linked (GlcNAc) serine; alternate).

This sequence belongs to the protein kinase superfamily. AGC Ser/Thr protein kinase family. RAC subfamily. In terms of assembly, interacts (via PH domain) with TCL1A; this enhances AKT3 phosphorylation and activation. Interacts with TRAF6. Interacts with KCTD20. Interacts with BTBD10. Phosphorylation on Thr-305 and Ser-472 is required for full activity. Phosphorylation of the activation loop at Thr-305 by PDPK1/PDK1 is a prerequisite for full activation. Phosphorylation at Ser-472 by mTORC2 in response to growth factors plays a key role in AKT1 activation by facilitating subsequent phosphorylation of the activation loop by PDPK1/PDK1. In terms of processing, ubiquitinated. When fully phosphorylated and translocated into the nucleus, undergoes 'Lys-48'-polyubiquitination catalyzed by TTC3, leading to its degradation by the proteasome. Post-translationally, O-GlcNAcylation at Thr-302 and Thr-309 inhibits activating phosphorylation at Thr-305 via disrupting the interaction between AKT and PDPK1/PDK1. In terms of tissue distribution, isoform 1 is expressed in prostate, testis, uterus and mammary gland and isoform 2 is expressed in prostate, testis and mammary gland.

It is found in the nucleus. It localises to the cytoplasm. The protein resides in the membrane. The catalysed reaction is L-seryl-[protein] + ATP = O-phospho-L-seryl-[protein] + ADP + H(+). It carries out the reaction L-threonyl-[protein] + ATP = O-phospho-L-threonyl-[protein] + ADP + H(+). Two specific sites, one in the kinase domain (Thr-305) and the other in the C-terminal regulatory region (Ser-472), need to be phosphorylated for its full activation. IGF-1 leads to the activation of AKT3, which may play a role in regulating cell survival. Functionally, AKT3 is one of 3 closely related serine/threonine-protein kinases (AKT1, AKT2 and AKT3) called the AKT kinase, and which regulate many processes including metabolism, proliferation, cell survival, growth and angiogenesis. This is mediated through serine and/or threonine phosphorylation of a range of downstream substrates. Over 100 substrate candidates have been reported so far, but for most of them, no isoform specificity has been reported. AKT3 is the least studied AKT isoform. It plays an important role in brain development and is crucial for the viability of malignant glioma cells. AKT3 isoform may also be the key molecule in up-regulation and down-regulation of MMP13 via IL13. Required for the coordination of mitochondrial biogenesis with growth factor-induced increases in cellular energy demands. Down-regulation by RNA interference reduces the expression of the phosphorylated form of BAD, resulting in the induction of caspase-dependent apoptosis. The sequence is that of RAC-gamma serine/threonine-protein kinase (Akt3) from Mus musculus (Mouse).